A 222-amino-acid polypeptide reads, in one-letter code: Peroxiredoxin (222 aa).

Residues 2-157 enclose the Thioredoxin domain; the sequence is VVLGQKFPEV…ILRLVEALQT (156 aa). The Cysteine sulfenic acid (-SOH) intermediate role is filled by Cys44. Arg120 is a substrate binding site. Cys211 and Cys217 are joined by a disulfide.

The protein belongs to the peroxiredoxin family. Prx6 subfamily. Homodecamer. Pentamer of dimers that assemble into a ring structure.

It is found in the cytoplasm. The enzyme catalyses a hydroperoxide + [thioredoxin]-dithiol = an alcohol + [thioredoxin]-disulfide + H2O. In terms of biological role, thiol-specific peroxidase that catalyzes the reduction of hydrogen peroxide and organic hydroperoxides to water and alcohols, respectively. Plays a role in cell protection against oxidative stress by detoxifying peroxides. The chain is Peroxiredoxin from Nanoarchaeum equitans (strain Kin4-M).